A 142-amino-acid polypeptide reads, in one-letter code: Transcriptional regulator MraZ (142 aa).

SpoVT-AbrB domains follow at residues 5-47 (EYQH…TINE) and 76-119 (ACIV…SREK).

It belongs to the MraZ family. Forms oligomers.

Its subcellular location is the cytoplasm. The protein localises to the nucleoid. This is Transcriptional regulator MraZ from Clostridium botulinum (strain Alaska E43 / Type E3).